The sequence spans 267 residues: Indole-3-glycerol phosphate synthase (267 aa).

It belongs to the TrpC family.

It catalyses the reaction 1-(2-carboxyphenylamino)-1-deoxy-D-ribulose 5-phosphate + H(+) = (1S,2R)-1-C-(indol-3-yl)glycerol 3-phosphate + CO2 + H2O. It participates in amino-acid biosynthesis; L-tryptophan biosynthesis; L-tryptophan from chorismate: step 4/5. The sequence is that of Indole-3-glycerol phosphate synthase from Cupriavidus necator (strain ATCC 17699 / DSM 428 / KCTC 22496 / NCIMB 10442 / H16 / Stanier 337) (Ralstonia eutropha).